The chain runs to 1436 residues: Probable deoxyribonuclease RhsB (1436 aa).

The tract at residues 16–42 (HAGNRPNPPADRPQPCQGKPPTSPGKT) is disordered. The next 2 helical transmembrane spans lie at 48 to 68 (FLGALAGAVAGALVAAAVAAA) and 70 to 90 (VFLVGVTGGLAVAAVGALAVF). YD repeat units follow at residues 486–521 (YNTAHRLTRWHDNDQTWARYEYDAQGRCVYTTCADG), 569–605 (YDEVGNLLREISPAGRVVEFTYLDDTGRVSTFTDGSG), 612–647 (YDDAQRLCGVTDPLGREWGWVYDAEGNPERLTGPDA), 766–799 (DLLTARTDAEGRTWRYEYDRESQQLIAVTAPDGS), and 847–879 (YDARGLLLRETAPDDTLHYRYDAAGRLTEVSSA).

The protein belongs to the RHS/WapA nuclease family.

Its subcellular location is the membrane. In terms of biological role, toxic component of a toxin-immunity protein module, which functions as a cellular contact-dependent growth inhibition (CDI) system. This protein may be a nuclease that is specifically inhibited by its cognate immunity protein RhsBI. Upon expression of the C-terminus (residues 1284-1436) in E.coli growth is inhibited, cells elongate, nucleoids condense and plasmid DNA is degraded; these effects are blocked specifically by cognate immunity protein RshIB. Cell contact is necessary for growth inhibition. The chain is Probable deoxyribonuclease RhsB (rhsB) from Dickeya dadantii (strain 3937) (Erwinia chrysanthemi (strain 3937)).